A 34-amino-acid chain; its full sequence is Photosystem I reaction center subunit XII (34 aa).

A helical transmembrane segment spans residues 4–24 (VLSAPEVFIALVVAAHAAVLA).

The protein belongs to the PsaM family.

The protein resides in the cellular thylakoid membrane. This Synechococcus sp. (strain CC9605) protein is Photosystem I reaction center subunit XII.